Reading from the N-terminus, the 1187-residue chain is DNA-directed RNA polymerase subunit beta (1187 aa).

The disordered stretch occupies residues 1150–1187 (KDEDDDPASSADDLGFNIGARPDAAAKEDQKAEEPEYQ). Residues 1173–1187 (AAAKEDQKAEEPEYQ) show a composition bias toward basic and acidic residues.

It belongs to the RNA polymerase beta chain family. In terms of assembly, the RNAP catalytic core consists of 2 alpha, 1 beta, 1 beta' and 1 omega subunit. When a sigma factor is associated with the core the holoenzyme is formed, which can initiate transcription.

It catalyses the reaction RNA(n) + a ribonucleoside 5'-triphosphate = RNA(n+1) + diphosphate. In terms of biological role, DNA-dependent RNA polymerase catalyzes the transcription of DNA into RNA using the four ribonucleoside triphosphates as substrates. This is DNA-directed RNA polymerase subunit beta from Bifidobacterium longum (strain NCC 2705).